The chain runs to 56 residues: Small ribosomal subunit protein uS14 (56 aa).

Residues cysteine 21, cysteine 24, cysteine 39, and cysteine 42 each contribute to the Zn(2+) site.

Belongs to the universal ribosomal protein uS14 family. In terms of assembly, component of the small ribosomal subunit. Mature ribosomes consist of a small (40S) and a large (60S) subunit. The 40S subunit contains about 32 different proteins and 1 molecule of RNA (18S). The 60S subunit contains 45 different proteins and 3 molecules of RNA (25S, 5.8S and 5S). Requires Zn(2+) as cofactor.

It is found in the cytoplasm. Functionally, component of the ribosome, a large ribonucleoprotein complex responsible for the synthesis of proteins in the cell. The small ribosomal subunit (SSU) binds messenger RNAs (mRNAs) and translates the encoded message by selecting cognate aminoacyl-transfer RNA (tRNA) molecules. The large subunit (LSU) contains the ribosomal catalytic site termed the peptidyl transferase center (PTC), which catalyzes the formation of peptide bonds, thereby polymerizing the amino acids delivered by tRNAs into a polypeptide chain. The nascent polypeptides leave the ribosome through a tunnel in the LSU and interact with protein factors that function in enzymatic processing, targeting, and the membrane insertion of nascent chains at the exit of the ribosomal tunnel. This is Small ribosomal subunit protein uS14 from Candida albicans (strain SC5314 / ATCC MYA-2876) (Yeast).